Here is a 380-residue protein sequence, read N- to C-terminus: Cytochrome b (380 aa).

4 helical membrane passes run phenylalanine 33–methionine 53, tryptophan 77–isoleucine 98, tryptophan 113–leucine 133, and phenylalanine 178–leucine 198. Residues histidine 83 and histidine 97 each contribute to the heme b site. Residues histidine 182 and histidine 196 each contribute to the heme b site. An a ubiquinone-binding site is contributed by histidine 201. Transmembrane regions (helical) follow at residues tyrosine 226 to serine 246, leucine 288 to histidine 308, alanine 320 to glycine 340, and phenylalanine 347 to proline 367.

It belongs to the cytochrome b family. In terms of assembly, the cytochrome bc1 complex contains 3 respiratory subunits (MT-CYB, CYC1 and UQCRFS1), 2 core proteins (UQCRC1 and UQCRC2) and probably 6 low-molecular weight proteins. Heme b serves as cofactor.

The protein localises to the mitochondrion inner membrane. Its function is as follows. Component of the ubiquinol-cytochrome c reductase complex (complex III or cytochrome b-c1 complex) that is part of the mitochondrial respiratory chain. The b-c1 complex mediates electron transfer from ubiquinol to cytochrome c. Contributes to the generation of a proton gradient across the mitochondrial membrane that is then used for ATP synthesis. This is Cytochrome b (mt-cyb) from Scomber scombrus (Atlantic mackerel).